The following is a 494-amino-acid chain: Guanosine-5'-triphosphate,3'-diphosphate pyrophosphatase (494 aa).

Belongs to the GppA/Ppx family. GppA subfamily.

It catalyses the reaction guanosine 3'-diphosphate 5'-triphosphate + H2O = guanosine 3',5'-bis(diphosphate) + phosphate + H(+). It participates in purine metabolism; ppGpp biosynthesis; ppGpp from GTP: step 2/2. Its function is as follows. Catalyzes the conversion of pppGpp to ppGpp. Guanosine pentaphosphate (pppGpp) is a cytoplasmic signaling molecule which together with ppGpp controls the 'stringent response', an adaptive process that allows bacteria to respond to amino acid starvation, resulting in the coordinated regulation of numerous cellular activities. The sequence is that of Guanosine-5'-triphosphate,3'-diphosphate pyrophosphatase from Escherichia coli (strain 55989 / EAEC).